The chain runs to 434 residues: 3-phosphoshikimate 1-carboxyvinyltransferase (434 aa).

3-phosphoshikimate-binding residues include Lys22, Ser23, and Arg27. Lys22 lines the phosphoenolpyruvate pocket. Residues Gly94 and Arg122 each contribute to the phosphoenolpyruvate site. Residues Ser167, Gln169, Asp314, and Lys341 each contribute to the 3-phosphoshikimate site. Phosphoenolpyruvate is bound at residue Gln169. Asp314 serves as the catalytic Proton acceptor. Arg345 and Arg391 together coordinate phosphoenolpyruvate.

The protein belongs to the EPSP synthase family. Monomer.

The protein localises to the cytoplasm. The catalysed reaction is 3-phosphoshikimate + phosphoenolpyruvate = 5-O-(1-carboxyvinyl)-3-phosphoshikimate + phosphate. The protein operates within metabolic intermediate biosynthesis; chorismate biosynthesis; chorismate from D-erythrose 4-phosphate and phosphoenolpyruvate: step 6/7. In terms of biological role, catalyzes the transfer of the enolpyruvyl moiety of phosphoenolpyruvate (PEP) to the 5-hydroxyl of shikimate-3-phosphate (S3P) to produce enolpyruvyl shikimate-3-phosphate and inorganic phosphate. In Leuconostoc mesenteroides subsp. mesenteroides (strain ATCC 8293 / DSM 20343 / BCRC 11652 / CCM 1803 / JCM 6124 / NCDO 523 / NBRC 100496 / NCIMB 8023 / NCTC 12954 / NRRL B-1118 / 37Y), this protein is 3-phosphoshikimate 1-carboxyvinyltransferase.